Reading from the N-terminus, the 57-residue chain is Small ribosomal subunit protein bS21B (57 aa).

Residues 37-57 (RYEKPSARRKRKAEAARKRRR) are disordered. Basic residues predominate over residues 43–57 (ARRKRKAEAARKRRR).

It belongs to the bacterial ribosomal protein bS21 family.

The sequence is that of Small ribosomal subunit protein bS21B from Gloeobacter violaceus (strain ATCC 29082 / PCC 7421).